Here is a 195-residue protein sequence, read N- to C-terminus: MARCKS-related protein (195 aa).

The interval 1–195 (MGSQSSKAPR…PTPASAEQNE (195 aa)) is disordered. Glycine 2 carries the N-myristoyl glycine lipid modification. Threonine 14 carries the post-translational modification Phosphothreonine. The span at 16-26 (EEAAGASPAKA) shows a compositional bias: low complexity. Phosphoserine occurs at positions 22, 36, 41, and 48. Residues 53-64 (GTDEAAGATGDA) are compositionally biased toward low complexity. A Phosphoserine modification is found at serine 71. Positions 76-85 (AKGEVPPKET) are enriched in basic and acidic residues. Threonine 85 bears the Phosphothreonine mark. A compositionally biased stretch (basic residues) spans 86 to 98 (PKKKKKFSFKKPF). The tract at residues 87–110 (KKKKKFSFKKPFKLSGLSFKRNRK) is effector domain involved in lipid-binding and calmodulin-binding. A phosphoserine mark is found at serine 93, serine 101, serine 104, serine 119, serine 120, and serine 135. Residue threonine 148 is modified to Phosphothreonine. Residues serine 151, serine 162, and serine 165 each carry the phosphoserine modification. Residues 153–195 (EPQAKGAEASAASEEEAGPQATEPSTPSGPESGPTPASAEQNE) show a composition bias toward low complexity. Phosphothreonine occurs at positions 178 and 187.

Belongs to the MARCKS family. As to quaternary structure, binds to filamentous actin (F-actin), but not to monomeric G-actin, independently of its phosphorylation status. In terms of processing, phosphorylated. Phosphorylation at Ser-120 and Thr-178 is non-redundantly catalyzed by MAPK8 in vivo. Phosphorylation at Thr-148 is preferentially catalyzed by MAPK8 in vivo, but this modification can also be catalyzed by other kinases in the absence of MAPK8. May be phosphorylated by protein kinase C, which disrupts the interaction with calmodulin.

It is found in the cytoplasm. The protein localises to the cytoskeleton. Its subcellular location is the cell membrane. Controls cell movement by regulating actin cytoskeleton homeostasis and filopodium and lamellipodium formation. When unphosphorylated, induces cell migration. When phosphorylated by MAPK8, induces actin bundles formation and stabilization, thereby reducing actin plasticity, hence restricting cell movement, including neuronal migration. May be involved in coupling the protein kinase C and calmodulin signal transduction systems. The polypeptide is MARCKS-related protein (MARCKSL1) (Homo sapiens (Human)).